Reading from the N-terminus, the 507-residue chain is Extracellular elastase (507 aa).

A signal peptide spans 1–28; the sequence is MKNFSKFALTSIAALTVASPLVNTEVDA. Positions 29 to 207 are excised as a propeptide; it reads KDKVSATQNI…VVDKLNMIKE (179 aa). Position 347 (Asp347) interacts with Ca(2+). His351 lines the Zn(2+) pocket. The active site involves Glu352. Zn(2+) contacts are provided by His355 and Glu375. Residues Asp386, Glu388, Asp389, Leu391, Glu394, Tyr397, Thr398, Val401, and Asp404 each contribute to the Ca(2+) site. Catalysis depends on His435, which acts as the Proton donor.

The protein belongs to the peptidase M4 family. It depends on Ca(2+) as a cofactor. The cofactor is Zn(2+).

The protein localises to the secreted. In terms of biological role, protease that has a low substrate specificity. Glucagon is preferentially cleaved between aromatic (Phe) and hydrophobic (Val) amino acids. Hydrolyzes casein and elastin. The protein is Extracellular elastase (sepA) of Staphylococcus epidermidis.